The following is a 30-amino-acid chain: Dendrotoxin A (30 aa).

Cysteine 3 and cysteine 22 are joined by a disulfide.

It belongs to the three-finger toxin family. Short-chain subfamily. Acn-esterase inhibitor sub-subfamily. Contains 4 disulfide bonds. As to expression, expressed by the venom gland.

The protein resides in the secreted. Its function is as follows. Inhibits acetylcholinesterase. Has been described to inhibit both the slowly and the rapidly inactivating phases of potassium efflux. This chain is Dendrotoxin A, found in Dendroaspis angusticeps (Eastern green mamba).